Reading from the N-terminus, the 1438-residue chain is DNA polymerase III PolC-type (1438 aa).

The Exonuclease domain occupies 422 to 578 (YVVFDVETTG…YDTEATAYMF (157 aa)).

Belongs to the DNA polymerase type-C family. PolC subfamily.

Its subcellular location is the cytoplasm. It catalyses the reaction DNA(n) + a 2'-deoxyribonucleoside 5'-triphosphate = DNA(n+1) + diphosphate. Functionally, required for replicative DNA synthesis. This DNA polymerase also exhibits 3' to 5' exonuclease activity. This chain is DNA polymerase III PolC-type, found in Staphylococcus saprophyticus subsp. saprophyticus (strain ATCC 15305 / DSM 20229 / NCIMB 8711 / NCTC 7292 / S-41).